Here is a 156-residue protein sequence, read N- to C-terminus: Small ribosomal subunit protein uS7 (156 aa).

This sequence belongs to the universal ribosomal protein uS7 family. In terms of assembly, part of the 30S ribosomal subunit. Contacts proteins S9 and S11.

One of the primary rRNA binding proteins, it binds directly to 16S rRNA where it nucleates assembly of the head domain of the 30S subunit. Is located at the subunit interface close to the decoding center, probably blocks exit of the E-site tRNA. The chain is Small ribosomal subunit protein uS7 from Salmonella agona (strain SL483).